Reading from the N-terminus, the 418-residue chain is Serine hydroxymethyltransferase (418 aa).

Residues leucine 121 and 125 to 127 (GHL) contribute to the (6S)-5,6,7,8-tetrahydrofolate site. Lysine 230 is modified (N6-(pyridoxal phosphate)lysine). 355–357 (SPF) contacts (6S)-5,6,7,8-tetrahydrofolate.

The protein belongs to the SHMT family. As to quaternary structure, homodimer. Pyridoxal 5'-phosphate serves as cofactor.

Its subcellular location is the cytoplasm. The catalysed reaction is (6R)-5,10-methylene-5,6,7,8-tetrahydrofolate + glycine + H2O = (6S)-5,6,7,8-tetrahydrofolate + L-serine. Its pathway is one-carbon metabolism; tetrahydrofolate interconversion. The protein operates within amino-acid biosynthesis; glycine biosynthesis; glycine from L-serine: step 1/1. In terms of biological role, catalyzes the reversible interconversion of serine and glycine with tetrahydrofolate (THF) serving as the one-carbon carrier. This reaction serves as the major source of one-carbon groups required for the biosynthesis of purines, thymidylate, methionine, and other important biomolecules. Also exhibits THF-independent aldolase activity toward beta-hydroxyamino acids, producing glycine and aldehydes, via a retro-aldol mechanism. The sequence is that of Serine hydroxymethyltransferase from Streptococcus agalactiae serotype III (strain NEM316).